A 652-amino-acid polypeptide reads, in one-letter code: DNA ligase (652 aa).

NAD(+) is bound by residues 29–33, 78–79, and Glu107; these read DSDYD and SL. Lys109 acts as the N6-AMP-lysine intermediate in catalysis. Residues Arg130, Glu164, Lys278, and Lys302 each contribute to the NAD(+) site. The Zn(2+) site is built by Cys395, Cys398, Cys413, and Cys418. Positions 577 to 652 constitute a BRCT domain; sequence NSDAALFGLT…IEDEDWLRKL (76 aa).

The protein belongs to the NAD-dependent DNA ligase family. LigA subfamily. It depends on Mg(2+) as a cofactor. The cofactor is Mn(2+).

The enzyme catalyses NAD(+) + (deoxyribonucleotide)n-3'-hydroxyl + 5'-phospho-(deoxyribonucleotide)m = (deoxyribonucleotide)n+m + AMP + beta-nicotinamide D-nucleotide.. Its function is as follows. DNA ligase that catalyzes the formation of phosphodiester linkages between 5'-phosphoryl and 3'-hydroxyl groups in double-stranded DNA using NAD as a coenzyme and as the energy source for the reaction. It is essential for DNA replication and repair of damaged DNA. The protein is DNA ligase of Streptococcus pyogenes serotype M18 (strain MGAS8232).